The following is a 435-amino-acid chain: Xylose isomerase (435 aa).

Active-site residues include histidine 99 and aspartate 102. Mg(2+)-binding residues include glutamate 230, glutamate 266, histidine 269, aspartate 294, aspartate 305, aspartate 307, and aspartate 337.

The protein belongs to the xylose isomerase family. Homotetramer. Requires Mg(2+) as cofactor.

Its subcellular location is the cytoplasm. It catalyses the reaction alpha-D-xylose = alpha-D-xylulofuranose. The sequence is that of Xylose isomerase from Enterococcus faecalis (strain ATCC 700802 / V583).